We begin with the raw amino-acid sequence, 180 residues long: Large ribosomal subunit protein uL5 (180 aa).

The protein belongs to the universal ribosomal protein uL5 family. Part of the 50S ribosomal subunit; part of the 5S rRNA/L5/L18/L25 subcomplex. Contacts the 5S rRNA and the P site tRNA. Forms a bridge to the 30S subunit in the 70S ribosome.

In terms of biological role, this is one of the proteins that bind and probably mediate the attachment of the 5S RNA into the large ribosomal subunit, where it forms part of the central protuberance. In the 70S ribosome it contacts protein S13 of the 30S subunit (bridge B1b), connecting the 2 subunits; this bridge is implicated in subunit movement. Contacts the P site tRNA; the 5S rRNA and some of its associated proteins might help stabilize positioning of ribosome-bound tRNAs. The sequence is that of Large ribosomal subunit protein uL5 from Streptococcus equi subsp. equi (strain 4047).